The sequence spans 85 residues: uncharacterized protein (85 aa).

Residues Met1–Gly19 form the signal peptide. Residue Cys20 is the site of N-palmitoyl cysteine attachment. The S-diacylglycerol cysteine moiety is linked to residue Cys20.

The protein localises to the cell outer membrane. This is an uncharacterized protein from Escherichia coli (strain K12).